The chain runs to 401 residues: MSERKLFTSESVSEGHPDKIADQISDAILDAILAKDPEAHVAAETCVYTGSVHVFGEISTTAYVDINRVVRDTIAEIGYTEAEYGFSAESVGVHPSLVEQSPDIAQGVNEALEAREGQSDDFNVIGAGDQGLMFGFAIDETPELMPLPISLSHQLVRRLAALRKSGEISYLRPDAKSQVTVEYDEHDKPVRVDTVVISTQHDPEVSNDQIRQDMIEQVIKAVIPAHYLDEKTRFLINPTGRFVIGGPQGDSGLTGRKIIVDTYGGYARHGGGAFSGKDATKVDRSASYAARYIAKNLVAAGLASKAEVQLAYAIGVAQPVSVRVDTFGTSTVSESILEAAVRQVFDLRPAGIIKMLDLKRPIYKQTAAYGHMGRTDIDLPWEHLDKVSPLTEAVAALSEGA.

H16 contacts ATP. D18 serves as a coordination point for Mg(2+). E44 is a binding site for K(+). L-methionine is bound by residues E57 and Q100. Residues 100–110 (QSPDIAQGVNE) form a flexible loop region. ATP-binding positions include 174 to 176 (DAK), 241 to 242 (RF), D250, 256 to 257 (RK), A273, and K277. Residue D250 participates in L-methionine binding. K281 is a binding site for L-methionine.

Belongs to the AdoMet synthase family. Homotetramer; dimer of dimers. The cofactor is Mg(2+). K(+) serves as cofactor.

It localises to the cytoplasm. The enzyme catalyses L-methionine + ATP + H2O = S-adenosyl-L-methionine + phosphate + diphosphate. It functions in the pathway amino-acid biosynthesis; S-adenosyl-L-methionine biosynthesis; S-adenosyl-L-methionine from L-methionine: step 1/1. Its function is as follows. Catalyzes the formation of S-adenosylmethionine (AdoMet) from methionine and ATP. The overall synthetic reaction is composed of two sequential steps, AdoMet formation and the subsequent tripolyphosphate hydrolysis which occurs prior to release of AdoMet from the enzyme. In Streptococcus equi subsp. zooepidemicus (strain H70), this protein is S-adenosylmethionine synthase.